We begin with the raw amino-acid sequence, 337 residues long: Inositol 2-dehydrogenase (337 aa).

It belongs to the Gfo/Idh/MocA family. In terms of assembly, homotetramer.

The enzyme catalyses myo-inositol + NAD(+) = scyllo-inosose + NADH + H(+). Involved in the oxidation of myo-inositol (MI) to 2-keto-myo-inositol (2KMI or 2-inosose). This is Inositol 2-dehydrogenase from Pseudarthrobacter chlorophenolicus (strain ATCC 700700 / DSM 12829 / CIP 107037 / JCM 12360 / KCTC 9906 / NCIMB 13794 / A6) (Arthrobacter chlorophenolicus).